The sequence spans 124 residues: MARLAGVDIPREKRVEVALTYIYGVGRTRALQTLRETEISGEIRVKDLTDEQLVSLRDYIEGNFKVEGDLRREVAADIRRKVEIGSYEGIRHRKGLPVRGQRTKTNARTRKGPKRTVAGKKKAR.

Residues 95–124 (GLPVRGQRTKTNARTRKGPKRTVAGKKKAR) form a disordered region.

Belongs to the universal ribosomal protein uS13 family. Part of the 30S ribosomal subunit. Forms a loose heterodimer with protein S19. Forms two bridges to the 50S subunit in the 70S ribosome.

Functionally, located at the top of the head of the 30S subunit, it contacts several helices of the 16S rRNA. In the 70S ribosome it contacts the 23S rRNA (bridge B1a) and protein L5 of the 50S subunit (bridge B1b), connecting the 2 subunits; these bridges are implicated in subunit movement. Contacts the tRNAs in the A and P-sites. This Leifsonia xyli subsp. xyli (strain CTCB07) protein is Small ribosomal subunit protein uS13.